The chain runs to 225 residues: Orotidine 5'-phosphate decarboxylase (225 aa).

Residues Asp-9, Lys-31, 58–67 (DLKLHDIPNT), Thr-115, Arg-176, Gln-184, Gly-204, and Arg-205 contribute to the substrate site. Residue Lys-60 is the Proton donor of the active site.

The protein belongs to the OMP decarboxylase family. Type 1 subfamily. In terms of assembly, homodimer.

The catalysed reaction is orotidine 5'-phosphate + H(+) = UMP + CO2. The protein operates within pyrimidine metabolism; UMP biosynthesis via de novo pathway; UMP from orotate: step 2/2. Functionally, catalyzes the decarboxylation of orotidine 5'-monophosphate (OMP) to uridine 5'-monophosphate (UMP). The sequence is that of Orotidine 5'-phosphate decarboxylase from Wolbachia sp. subsp. Brugia malayi (strain TRS).